Consider the following 428-residue polypeptide: Flap endonuclease 1-B (428 aa).

The N-domain stretch occupies residues 1–132; sequence MGIKGLTKVL…KELAKRSLKR (132 aa). Mg(2+) is bound at residue Asp34. Arg98 contacts DNA. Mg(2+) is bound by residues Asp114, Glu186, Glu188, Asp207, and Asp209. The tract at residues 150-281 is I-domain; that stretch reads AVEKFSKRTV…QRALKLIRQH (132 aa). Glu186 contacts DNA. DNA-binding residues include Gly259 and Asp261. Position 261 (Asp261) interacts with Mg(2+).

The protein belongs to the XPG/RAD2 endonuclease family. FEN1 subfamily. As to quaternary structure, interacts with PCNA. Three molecules of FEN1 bind to one PCNA trimer with each molecule binding to one PCNA monomer. PCNA stimulates the nuclease activity without altering cleavage specificity. It depends on Mg(2+) as a cofactor. In terms of processing, phosphorylated. Phosphorylation upon DNA damage induces relocalization to the nuclear plasma.

The protein localises to the nucleus. Its subcellular location is the nucleolus. The protein resides in the nucleoplasm. It is found in the mitochondrion. In terms of biological role, structure-specific nuclease with 5'-flap endonuclease and 5'-3' exonuclease activities involved in DNA replication and repair. During DNA replication, cleaves the 5'-overhanging flap structure that is generated by displacement synthesis when DNA polymerase encounters the 5'-end of a downstream Okazaki fragment. It enters the flap from the 5'-end and then tracks to cleave the flap base, leaving a nick for ligation. Also involved in the long patch base excision repair (LP-BER) pathway, by cleaving within the apurinic/apyrimidinic (AP) site-terminated flap. Acts as a genome stabilization factor that prevents flaps from equilibrating into structures that lead to duplications and deletions. Also possesses 5'-3' exonuclease activity on nicked or gapped double-stranded DNA, and exhibits RNase H activity. Also involved in replication and repair of rDNA and in repairing mitochondrial DNA. The sequence is that of Flap endonuclease 1-B from Sorghum bicolor (Sorghum).